We begin with the raw amino-acid sequence, 858 residues long: MFIFQLKISLFMSDFEQHSLDESKISPMMMQWHACKKMAGDAILFFRMGDFYEAFYEDAHLLSKELELTLTKRQEIPMSGIPFHTSEGYIDKLVAKGFRVAIAEQIEDPKKTKGLVKREVVRVVSPGTVINSSLLSDKNNNFFAALVKVGQIFGLAFLDLTTGEYWVSEFTQERELLNELYRLHPAEFLTSEKFKEKHASLFEEMQQTYSFLVNTLEDWQFEHQQAHDFLINHFKVQRLDGFGLSGMVAAINAAGALLNYLQETLCLPIQHIQSIRCYSSSQFMMLDRMTQRNLELTHSLQDGSRRHTLLGVIDQTQTPMGARLMHHWVKQPLLKVSEIHQRQNGIQALLNHEHIVDQLQNLFLQIKDIERLMMKVSACYATPRDLIALHFSFKPIAFIKSLLLNIPSEWINEHAQKLDPLSKMNALISNAIVEEPPLRLGEGKTFRQGFHRELDELREISHDSKAWMARYQTQIREETGIKTLKVGFNKMFGYFIEVSRGQIDKMPDHFIRRQTLVNAERYITPELKEYESKVLTAEERINSIESELFHQLRLEVASYTKNVLEVAQALAKIDCLISLTNVAKKYCYTCPVIDDSSILVIEEGRHPVIETVCRHEKFIPNDTYLDDQANRLLLITGPNMAGKSTYLRQVALIVILAQIGSFVPAAKAHIGIIDKVFTRIGASDDLSRGQSTFMVEMTETANILNNATSQSLVILDEIGRGTSTYDGISIAWSVAEYLLTTEKRMAKTLFATHYWELTKLEEKVPGAVNYNVAVHEADDHITFLRKIIKGGTDKSYGIHVARLAGLPQAVLNRSKEILEHLEENANRKSAFEPTRSKKSMVSKVKVPSTDFQLNLFQS.

Position 637–644 (637–644 (GPNMAGKS)) interacts with ATP.

The protein belongs to the DNA mismatch repair MutS family.

This protein is involved in the repair of mismatches in DNA. It is possible that it carries out the mismatch recognition step. This protein has a weak ATPase activity. The chain is DNA mismatch repair protein MutS from Protochlamydia amoebophila (strain UWE25).